Consider the following 99-residue polypeptide: Malonate decarboxylase acyl carrier protein (99 aa).

Ser-25 is modified (O-(phosphoribosyl dephospho-coenzyme A)serine).

Belongs to the MdcC family. In terms of processing, covalently binds the prosthetic group of malonate decarboxylase.

The protein localises to the cytoplasm. Its function is as follows. Subunit of malonate decarboxylase, it is an acyl carrier protein to which acetyl and malonyl thioester residues are bound via a 2'-(5''-phosphoribosyl)-3'-dephospho-CoA prosthetic group and turn over during the catalytic mechanism. This Pseudomonas savastanoi pv. phaseolicola (strain 1448A / Race 6) (Pseudomonas syringae pv. phaseolicola (strain 1448A / Race 6)) protein is Malonate decarboxylase acyl carrier protein.